A 125-amino-acid chain; its full sequence is Ribosome-binding factor A (125 aa).

The protein belongs to the RbfA family. As to quaternary structure, monomer. Binds 30S ribosomal subunits, but not 50S ribosomal subunits or 70S ribosomes.

The protein resides in the cytoplasm. One of several proteins that assist in the late maturation steps of the functional core of the 30S ribosomal subunit. Associates with free 30S ribosomal subunits (but not with 30S subunits that are part of 70S ribosomes or polysomes). Required for efficient processing of 16S rRNA. May interact with the 5'-terminal helix region of 16S rRNA. The polypeptide is Ribosome-binding factor A (Xylella fastidiosa (strain M12)).